Here is an 89-residue protein sequence, read N- to C-terminus: Small ribosomal subunit protein uS15 (89 aa).

This sequence belongs to the universal ribosomal protein uS15 family. Part of the 30S ribosomal subunit. Forms a bridge to the 50S subunit in the 70S ribosome, contacting the 23S rRNA.

Its function is as follows. One of the primary rRNA binding proteins, it binds directly to 16S rRNA where it helps nucleate assembly of the platform of the 30S subunit by binding and bridging several RNA helices of the 16S rRNA. In terms of biological role, forms an intersubunit bridge (bridge B4) with the 23S rRNA of the 50S subunit in the ribosome. This chain is Small ribosomal subunit protein uS15, found in Photobacterium profundum (strain SS9).